The chain runs to 493 residues: Dipeptide permease D (493 aa).

Transmembrane regions (helical) follow at residues valine 14–leucine 34, alanine 49–alanine 69, leucine 91–valine 111, glycine 138–cysteine 158, tryptophan 167–cysteine 187, asparagine 212–tryptophan 232, tryptophan 235–tyrosine 255, leucine 267–glycine 287, methionine 312–isoleucine 332, isoleucine 344–leucine 364, leucine 379–methionine 399, valine 413–isoleucine 433, and valine 458–leucine 478.

This sequence belongs to the major facilitator superfamily. Proton-dependent oligopeptide transporter (POT/PTR) (TC 2.A.17) family. DtpD subfamily.

It is found in the cell inner membrane. In terms of biological role, probable proton-dependent permease that transports dipeptides. This Citrobacter rodentium (strain ICC168) (Citrobacter freundii biotype 4280) protein is Dipeptide permease D.